We begin with the raw amino-acid sequence, 1066 residues long: Zinc finger and BTB domain-containing protein 21 (1066 aa).

Residues 30-96 (CDVLLIVGDQ…IYSSSLFVEK (67 aa)) form the BTB domain. The tract at residues 30 to 96 (CDVLLIVGDQ…IYSSSLFVEK (67 aa)) is mediates homodimerization. K40 participates in a covalent cross-link: Glycyl lysine isopeptide (Lys-Gly) (interchain with G-Cter in SUMO1); alternate. K40 participates in a covalent cross-link: Glycyl lysine isopeptide (Lys-Gly) (interchain with G-Cter in SUMO2); alternate. Over residues 154-177 (SRNEAQGKTVSQNQPDVSHTSRPS) the composition is skewed to polar residues. Residues 154–196 (SRNEAQGKTVSQNQPDVSHTSRPSPSIAVKANTNKPHVPKPIE) are disordered. Residues K255, K266, K273, K312, and K337 each participate in a glycyl lysine isopeptide (Lys-Gly) (interchain with G-Cter in SUMO2) cross-link. 2 positions are modified to phosphoserine: S345 and S381. K383 participates in a covalent cross-link: Glycyl lysine isopeptide (Lys-Gly) (interchain with G-Cter in SUMO2). Positions 388 to 399 (DCSEKTALDDRP) are enriched in basic and acidic residues. 3 disordered regions span residues 388 to 442 (DCSE…DPSD), 454 to 485 (TAAASSSSVTRDLSLKTEDDQKDMSRLPAKRR), and 498 to 525 (KVNEHGSPVSEDNFEEGSSPTLLDADFP). Residues S411 and S422 each carry the phosphoserine modification. Residue K430 forms a Glycyl lysine isopeptide (Lys-Gly) (interchain with G-Cter in SUMO2) linkage. Phosphothreonine is present on T431. S434, S435, and S438 each carry phosphoserine. The segment covering 466-478 (LSLKTEDDQKDMS) has biased composition (basic and acidic residues). Glycyl lysine isopeptide (Lys-Gly) (interchain with G-Cter in SUMO2) cross-links involve residues K469 and K475. C2H2-type zinc fingers lie at residues 546–569 (FKCKHCLKIFRSTAGLHRHVNMYH) and 575–598 (YACDICHKRFHTNFKVWTHCQTQH). The residue at position 605 (S605) is a Phosphoserine. Residues K617, K643, and K659 each participate in a glycyl lysine isopeptide (Lys-Gly) (interchain with G-Cter in SUMO2) cross-link. The C2H2-type 3 zinc-finger motif lies at 670–692 (YICTYCGKAYRFLSQFKQHIKMH). K702 participates in a covalent cross-link: Glycyl lysine isopeptide (Lys-Gly) (interchain with G-Cter in SUMO2). Position 714 is a phosphoserine (S714). The segment at 748–770 (AVCPYCSLRFFSPELKQEHESKC) adopts a C2H2-type 4; atypical zinc-finger fold. Glycyl lysine isopeptide (Lys-Gly) (interchain with G-Cter in SUMO2) cross-links involve residues K763 and K785. Residues 775–798 (LTCLECMRTFKSSFSIWRHQVEVH) form a C2H2-type 5 zinc finger. The disordered stretch occupies residues 806 to 840 (TENFSLPVLDHNGDVTGSSRPQSQPEPNKVNHIVT). Over residues 820 to 831 (VTGSSRPQSQPE) the composition is skewed to polar residues. K875 participates in a covalent cross-link: Glycyl lysine isopeptide (Lys-Gly) (interchain with G-Cter in SUMO2). Residue K879 forms a Glycyl lysine isopeptide (Lys-Gly) (interchain with G-Cter in SUMO1); alternate linkage. K879 participates in a covalent cross-link: Glycyl lysine isopeptide (Lys-Gly) (interchain with G-Cter in SUMO2); alternate. The segment at 879–906 (KEEPVEEAEEEAPEASTAPKEAGPSKEA) is disordered. The span at 882–891 (PVEEAEEEAP) shows a compositional bias: acidic residues. The C2H2-type 6; atypical zinc finger occupies 909–932 (WPCEKCGKMFTVHKQLERHQELLC). A Glycyl lysine isopeptide (Lys-Gly) (interchain with G-Cter in SUMO2) cross-link involves residue K935. The C2H2-type 7 zinc-finger motif lies at 937-959 (FICHVCNKAFRTNFRLWSHFQSH). The segment at 963–1014 (ASEESAHKESEVCPVPTNSPSPPPLPPPPPLPKIQPLEPDSPTGLSENPTPA) is disordered. Over residues 979–995 (TNSPSPPPLPPPPPLPK) the composition is skewed to pro residues. At S1003 the chain carries Phosphoserine. The C2H2-type 8 zinc-finger motif lies at 1043 to 1065 (FMCKLCHRTFKTAFSLWSHEQTH).

Homodimer. Interacts with ZBTB14. As to expression, ubiquitous in fetal and adult tissues.

The protein localises to the nucleus. Functionally, acts as a transcription repressor. The polypeptide is Zinc finger and BTB domain-containing protein 21 (ZBTB21) (Homo sapiens (Human)).